A 178-amino-acid chain; its full sequence is Translation initiation factor IF-3 (178 aa).

The protein belongs to the IF-3 family. Monomer.

It is found in the cytoplasm. Functionally, IF-3 binds to the 30S ribosomal subunit and shifts the equilibrium between 70S ribosomes and their 50S and 30S subunits in favor of the free subunits, thus enhancing the availability of 30S subunits on which protein synthesis initiation begins. This chain is Translation initiation factor IF-3, found in Ralstonia nicotianae (strain ATCC BAA-1114 / GMI1000) (Ralstonia solanacearum).